A 440-amino-acid chain; its full sequence is 3-phosphoshikimate 1-carboxyvinyltransferase (440 aa).

Positions 25, 26, and 30 each coordinate 3-phosphoshikimate. Lysine 25 contributes to the phosphoenolpyruvate binding site. Phosphoenolpyruvate-binding residues include glycine 96 and arginine 124. Residues serine 168, glutamine 169, aspartate 310, and lysine 337 each contribute to the 3-phosphoshikimate site. Glutamine 169 lines the phosphoenolpyruvate pocket. Aspartate 310 serves as the catalytic Proton acceptor. Residues arginine 341, arginine 382, and lysine 409 each coordinate phosphoenolpyruvate.

Belongs to the EPSP synthase family. In terms of assembly, monomer.

It is found in the cytoplasm. It carries out the reaction 3-phosphoshikimate + phosphoenolpyruvate = 5-O-(1-carboxyvinyl)-3-phosphoshikimate + phosphate. Its pathway is metabolic intermediate biosynthesis; chorismate biosynthesis; chorismate from D-erythrose 4-phosphate and phosphoenolpyruvate: step 6/7. Its function is as follows. Catalyzes the transfer of the enolpyruvyl moiety of phosphoenolpyruvate (PEP) to the 5-hydroxyl of shikimate-3-phosphate (S3P) to produce enolpyruvyl shikimate-3-phosphate and inorganic phosphate. The sequence is that of 3-phosphoshikimate 1-carboxyvinyltransferase from Chlamydia trachomatis serovar L2 (strain ATCC VR-902B / DSM 19102 / 434/Bu).